The sequence spans 25 residues: Bioremediase (25 aa).

The Alpha-carbonic anhydrase domain maps to 1-25; that stretch reads DFPIANGERQSPVDIDTKAVVQDPA. Residues 1-25 are disordered; the sequence is DFPIANGERQSPVDIDTKAVVQDPA.

It belongs to the alpha-carbonic anhydrase family. The cofactor is Zn(2+).

In terms of biological role, releases silica from silica-rich substances. The protein is Bioremediase of Thermoanaerobacter sp.